We begin with the raw amino-acid sequence, 965 residues long: MASNNVAQFAAELKMPAGVLLEQLQAAGVQKASEDDALSETDKARLLDHLRRSHGSNDADKRKITLTKRHTSEIKQSDATGKARTIQVEVRKKRTFVRRDEAAEQAAEATGNGQEAAEDLELQRREEEARHEAELLEKQAQELKARQEQLAREEAERQAREQAAEAERRRAEEEAAKKRAAAVAEAAAAAREQAEQERASQDEERAAAERAAQREAAKKAEDAAREQAEKARLEQEEIAKRRAKAEAEARAIREMMNTPRKAQVKAPEPPPKPAEAPKPAEAKGTLHKPARPAGETSARPAAKKPAPAAAAQPAATTQPAGPGGDKKKAGGKGGWQDDAAKRRGIKTRGDTSGGVDRGWRGGPKGRGKHQESTTFQAPTEPIVREVHVPETITVADLAHKMSVKASEVIKVMMKLGQMVTINQMLDQETAMIVVEELGHHAVAAKLDDPEAMLVEGEASDAPQLPRPPVVTVMGHVDHGKTSLLDYIRRAKVAAGEAGGITQHIGAYHVETPRGVITFLDTPGHEAFTAMRARGAKATDIVILVVAADDGVMPQTKEAISHAKAGGVPLVVAINKIDKPEANPERVKQELVAEGVVPEEYGGDSPFVPVSAKTGAGIDDLLENVLLQAEVLELKAPVEAPAKGLVIEAKLDKGKGPVATILVQSGTLNRGDVVLAGSAYGRVRAMLDETGKPTKAAGPSIPVEIQGLSEVPAAGEEVIVMPDDRKAREVALFRQGKFRDVKLAKQQAAKLENMLEQMGEGEVQYLPLIVKADVQGSQEALVQSLLKLSNDEVRVQIVHSAVGGISESDVNLATASKAVIIGFNTRADAQARKLAESNGIDIRYYNIIYDAVDEVKAAMSGMLAPEKREVVTGMVEVRQVFKVPKVGAVAGCMVTDGVVKRTSSVRVLRNNVVIHTGELDSLKRFKDDVKEVRQGFECGMSVKNFNDIMEGDQFEVFEVTEVARTL.

The interval 94–375 (RTFVRRDEAA…RGKHQESTTF (282 aa)) is disordered. The span at 104-115 (EQAAEATGNGQE) shows a compositional bias: low complexity. A compositionally biased stretch (basic and acidic residues) spans 121–177 (ELQRREEEARHEAELLEKQAQELKARQEQLAREEAERQAREQAAEAERRRAEEEAAK). Positions 181–191 (AAVAEAAAAAR) are enriched in low complexity. A compositionally biased stretch (basic and acidic residues) spans 192–253 (EQAEQERASQ…KAEAEARAIR (62 aa)). The segment covering 267–276 (PEPPPKPAEA) has biased composition (pro residues). A compositionally biased stretch (low complexity) spans 303–320 (KKPAPAAAAQPAATTQPA). Gly residues predominate over residues 351–364 (TSGGVDRGWRGGPK). Positions 465 to 634 (PRPPVVTVMG…LLQAEVLELK (170 aa)) constitute a tr-type G domain. The segment at 474-481 (GHVDHGKT) is G1. GTP is bound at residue 474-481 (GHVDHGKT). The interval 499–503 (GITQH) is G2. The interval 520 to 523 (DTPG) is G3. GTP contacts are provided by residues 520 to 524 (DTPGH) and 574 to 577 (NKID). Positions 574 to 577 (NKID) are G4. The G5 stretch occupies residues 610-612 (SAK).

Belongs to the TRAFAC class translation factor GTPase superfamily. Classic translation factor GTPase family. IF-2 subfamily.

Its subcellular location is the cytoplasm. One of the essential components for the initiation of protein synthesis. Protects formylmethionyl-tRNA from spontaneous hydrolysis and promotes its binding to the 30S ribosomal subunits. Also involved in the hydrolysis of GTP during the formation of the 70S ribosomal complex. The protein is Translation initiation factor IF-2 of Paraburkholderia phymatum (strain DSM 17167 / CIP 108236 / LMG 21445 / STM815) (Burkholderia phymatum).